The primary structure comprises 71 residues: Small ribosomal subunit protein bS21 (71 aa).

This sequence belongs to the bacterial ribosomal protein bS21 family.

This chain is Small ribosomal subunit protein bS21, found in Thioalkalivibrio sulfidiphilus (strain HL-EbGR7).